The sequence spans 260 residues: Scytalidopepsin B (260 aa).

The N-terminal stretch at 1–20 (MKFTTAAVLSALVSAEIAFA) is a signal peptide. A propeptide spanning residues 21 to 54 (APGGNGFARRQARRQARAAGLKASPFRQVNAKEA) is cleaved from the precursor. The cysteines at positions 101 and 181 are disulfide-linked. The active-site Proton acceptor is the Glu190. Cystine bridges form between Cys195-Cys219 and Cys248-Cys257.

Belongs to the peptidase G1 family. In terms of assembly, monomer.

The enzyme catalyses Hydrolysis of proteins with broad specificity, cleaving 24-Phe-|-Phe-25, but not 15-Leu-|-Tyr-16 and 25-Phe-|-Tyr-26 in the B chain of insulin.. This is Scytalidopepsin B from Scytalidium lignicola (Hyphomycete).